We begin with the raw amino-acid sequence, 450 residues long: Tubulin beta-1 chain (450 aa).

GTP contacts are provided by Gln11, Glu69, Ser138, Gly142, Thr143, Gly144, Asn204, and Asn226. Glu69 lines the Mg(2+) pocket. The tract at residues 426-450 (QDATADEDEYGEEEGDEEEYGQHDI) is disordered. The span at 429-444 (TADEDEYGEEEGDEEE) shows a compositional bias: acidic residues.

It belongs to the tubulin family. In terms of assembly, dimer of alpha and beta chains. A typical microtubule is a hollow water-filled tube with an outer diameter of 25 nm and an inner diameter of 15 nM. Alpha-beta heterodimers associate head-to-tail to form protofilaments running lengthwise along the microtubule wall with the beta-tubulin subunit facing the microtubule plus end conferring a structural polarity. Microtubules usually have 13 protofilaments but different protofilament numbers can be found in some organisms and specialized cells. Mg(2+) is required as a cofactor.

The protein resides in the cytoplasm. It is found in the cytoskeleton. Tubulin is the major constituent of microtubules, a cylinder consisting of laterally associated linear protofilaments composed of alpha- and beta-tubulin heterodimers. Microtubules grow by the addition of GTP-tubulin dimers to the microtubule end, where a stabilizing cap forms. Below the cap, tubulin dimers are in GDP-bound state, owing to GTPase activity of alpha-tubulin. In Pisum sativum (Garden pea), this protein is Tubulin beta-1 chain (TUBB1).